The primary structure comprises 432 residues: MIDSLDLVIDTVLAREVLDSRGNPTVEAEVLLEGGAIGRAIVPSGASTGAYEAHELRDAGDRYFGKGVLKVVENIEERIAPTICGLSASDQATIDGVMSELDGTENKSKLGANAILAVSIATARSAANGYGMPLYRYLGGPMASLLPVPLMNVINGGAHAANNLDFQEFMLVPHGANTFREALRMGAEVFHTLKQLLSEKGLSTAVGDEGGFAPNLQSNQAAGDLLVKSIEKAGFIPGEQISLALDVASTEFFKDGAYFFGGRNYSTEGMIEELVKLVNAYPIVSIEDGLAEDDWEGWGLLTKELGEKVQLVGDDLFVTNTSRLQRGINQKVANSILIKVNQIGSLTETLQAIDLANRSGYTSVISHRSGETEDTTIADLSVATRAGQIKTGSLSRSERVAKYNQLLRIEDELGSEATYAGSNDLGPLCGKK.

A (2R)-2-phosphoglycerate-binding site is contributed by Q167. E209 functions as the Proton donor in the catalytic mechanism. Mg(2+) contacts are provided by D246, E287, and D314. (2R)-2-phosphoglycerate-binding residues include K339, R368, S369, and K390. Catalysis depends on K339, which acts as the Proton acceptor.

The protein belongs to the enolase family. It depends on Mg(2+) as a cofactor.

It is found in the cytoplasm. It localises to the secreted. The protein localises to the cell surface. It catalyses the reaction (2R)-2-phosphoglycerate = phosphoenolpyruvate + H2O. It participates in carbohydrate degradation; glycolysis; pyruvate from D-glyceraldehyde 3-phosphate: step 4/5. Functionally, catalyzes the reversible conversion of 2-phosphoglycerate (2-PG) into phosphoenolpyruvate (PEP). It is essential for the degradation of carbohydrates via glycolysis. The chain is Enolase from Prochlorococcus marinus (strain MIT 9211).